Here is a 215-residue protein sequence, read N- to C-terminus: Adenylate kinase (215 aa).

Position 10–15 (10–15) interacts with ATP; the sequence is GAGKGT. Residues 30-59 are NMP; it reads STGDMLRAAVKAGSPLGQQVKGVMDSGGLV. AMP contacts are provided by residues threonine 31, arginine 36, 57-59, 85-88, and glutamine 92; these read GLV and GFPR. Positions 122-159 are LID; it reads GRRVHPASGRVYHTEHNPPKVAGKDDVTGEDLIQREDD. Residues arginine 123 and 132–133 each bind ATP; that span reads VY. AMP-binding residues include arginine 156 and arginine 167. An ATP-binding site is contributed by glycine 201.

This sequence belongs to the adenylate kinase family. In terms of assembly, monomer.

Its subcellular location is the cytoplasm. It catalyses the reaction AMP + ATP = 2 ADP. The protein operates within purine metabolism; AMP biosynthesis via salvage pathway; AMP from ADP: step 1/1. Functionally, catalyzes the reversible transfer of the terminal phosphate group between ATP and AMP. Plays an important role in cellular energy homeostasis and in adenine nucleotide metabolism. The protein is Adenylate kinase of Pseudomonas paraeruginosa (strain DSM 24068 / PA7) (Pseudomonas aeruginosa (strain PA7)).